The following is a 174-amino-acid chain: Large ribosomal subunit protein uL16 (174 aa).

This sequence belongs to the universal ribosomal protein uL16 family.

The protein is Large ribosomal subunit protein uL16 of Methanocaldococcus jannaschii (strain ATCC 43067 / DSM 2661 / JAL-1 / JCM 10045 / NBRC 100440) (Methanococcus jannaschii).